A 373-amino-acid chain; its full sequence is Capsular polysaccharide phosphotransferase (373 aa).

It belongs to the stealth family.

In terms of biological role, part of a capsule gene locus. Expression was not detected under standard growth conditions. The chain is Capsular polysaccharide phosphotransferase from Neisseria meningitidis serogroup B.